The following is a 177-amino-acid chain: ATP synthase subunit delta (177 aa).

The protein belongs to the ATPase delta chain family. F-type ATPases have 2 components, F(1) - the catalytic core - and F(0) - the membrane proton channel. F(1) has five subunits: alpha(3), beta(3), gamma(1), delta(1), epsilon(1). F(0) has three main subunits: a(1), b(2) and c(10-14). The alpha and beta chains form an alternating ring which encloses part of the gamma chain. F(1) is attached to F(0) by a central stalk formed by the gamma and epsilon chains, while a peripheral stalk is formed by the delta and b chains.

It is found in the cell inner membrane. Functionally, f(1)F(0) ATP synthase produces ATP from ADP in the presence of a proton or sodium gradient. F-type ATPases consist of two structural domains, F(1) containing the extramembraneous catalytic core and F(0) containing the membrane proton channel, linked together by a central stalk and a peripheral stalk. During catalysis, ATP synthesis in the catalytic domain of F(1) is coupled via a rotary mechanism of the central stalk subunits to proton translocation. Its function is as follows. This protein is part of the stalk that links CF(0) to CF(1). It either transmits conformational changes from CF(0) to CF(1) or is implicated in proton conduction. This chain is ATP synthase subunit delta, found in Vibrio parahaemolyticus serotype O3:K6 (strain RIMD 2210633).